Reading from the N-terminus, the 448-residue chain is Cyclic dof factor 3 (448 aa).

The tract at residues 26–108 is disordered; the sequence is AVTVEDDEED…DGKTLKKPTK (83 aa). Acidic residues predominate over residues 29-39; it reads VEDDEEDDWSG. Basic and acidic residues predominate over residues 40-54; it reads GDDKSPEKVTPELSD. Residues 55–69 show a composition bias toward low complexity; that stretch reads KNNNNCNDNSFNNSK. The segment covering 80–99 has biased composition (polar residues); that stretch reads STDQIESSDTPEDNQQTTPD. Residues 110-164 form a Dof-type zinc finger; sequence LPCPRCKSMETKFCYYNNYNINQPRHFCKACQRYWTAGGTMRNVPVGAGRRKNKS. Positions 112, 115, 137, and 140 each coordinate Zn(2+). Disordered regions lie at residues 243-269 and 332-370; these read NGDDCSSGSSVTTSNNHSVDESRAQSG and SSSPISQKCSNTNSPTLGKHPRDEGSSKKDNETERKQKA. Polar residues-rich tracts occupy residues 246–259 and 332–347; these read DCSSGSSVTTSNNH and SSSPISQKCSNTNSPT. Basic and acidic residues predominate over residues 351 to 368; sequence HPRDEGSSKKDNETERKQ.

Interacts with ADO2 (via kelch repeats) and ADO3 (via kelch repeats). As to expression, expressed in the vasculature of cotyledons and hypocotyls, leaves and roots.

It localises to the nucleus. Functionally, transcription factor that binds specifically to a 5'-AA[AG]G-3' consensus core sequence. Regulates a photoperiodic flowering response. Transcriptional repressor of 'CONSTANS' expression. The polypeptide is Cyclic dof factor 3 (CDF3) (Arabidopsis thaliana (Mouse-ear cress)).